The sequence spans 841 residues: MSVDEKPDSPMYVYESTVHCTNILLGLNDQRKKDILCDVTLIVERKEFRAHRAVLAACSEYFWQALVGQTKNDLVVSLPEEVTARGFGPLLQFAYTAKLLLSRENIREVIRCAEFLRMHNLEDSCFSFLQTQLLNSEDGLFVCRKDAACQRPHEDCENSAGEEEDEEEETMDSETAKMACPRDQMLPEPISFEAAAIPVAEKEEALLPEPDVPTDTKESSEKDALTQYPRYKKYQLACTKNVYNASSHSTSGFASTFREDNSSNSLKPGLARGQIKSEPPSEENEEESITLCLSGDEPDAKDRAGDVEMDRKQPSPAPTPTAPAGAACLERSRSVASPSCLRSLFSITKSVELSGLPSTSQQHFARSPACPFDKGITQGDLKTDYTPFTGNYGQPHVGQKEVSNFTMGSPLRGPGLEALCKQEGELDRRSVIFSSSACDQVSTSVHSYSGVSSLDKDLSEPVPKGLWVGAGQSLPSSQAYSHGGLMADHLPGRMRPNTSCPVPIKVCPRSPPLETRTRTSSSCSSYSYAEDGSGGSPCSLPLCEFSSSPCSQGARFLATEHQEPGLMGDGMYNQVRPQIKCEQSYGTNSSDESGSFSEADSESCPVQDRGQEVKLPFPVDQITDLPRNDFQMMIKMHKLTSEQLEFIHDVRRRSKNRIAAQRCRKRKLDCIQNLECEIRKLVCEKEKLLSERNQLKACMGELLDNFSCLSQEVCRDIQSPEQIQALHRYCPVLRPMDLPTASSINPAPLGAEQNIAASQCAVGENVPCCLEPGAAPPGPPWAPSNTSENCTSGRRLEGTDPGTFSERGPPLEPRSQTVTVDFCQEMTDKCTTDEQPRKDYT.

One can recognise a BTB domain in the interval 37–103 (CDVTLIVERK…AYTAKLLLSR (67 aa)). 3 disordered regions span residues 153–173 (HEDCENSAGEEEDEEEETMDS), 204–226 (EALLPEPDVPTDTKESSEKDALT), and 246–329 (SSHS…AACL). Over residues 160 to 172 (AGEEEDEEEETMD) the composition is skewed to acidic residues. Basic and acidic residues-rich tracts occupy residues 214-224 (TDTKESSEKDA) and 298-313 (PDAKDRAGDVEMDRKQ). Serine 315 is subject to Phosphoserine. Glycyl lysine isopeptide (Lys-Gly) (interchain with G-Cter in SUMO2) cross-links involve residues lysine 382 and lysine 421. At serine 521 the chain carries Phosphoserine; by RPS6KB1. Positions 583–610 (QSYGTNSSDESGSFSEADSESCPVQDRG) are disordered. The span at 584–598 (SYGTNSSDESGSFSE) shows a compositional bias: polar residues. The bZIP domain occupies 646–709 (FIHDVRRRSK…GELLDNFSCL (64 aa)). The basic motif stretch occupies residues 651–667 (RRRSKNRIAAQRCRKRK). Residues 671-678 (IQNLECEI) form a leucine-zipper region. The disordered stretch occupies residues 777–816 (PGPPWAPSNTSENCTSGRRLEGTDPGTFSERGPPLEPRSQ). Residues 821–841 (DFCQEMTDKCTTDEQPRKDYT) carry the Nuclear export signal motif.

The protein belongs to the bZIP family. CNC subfamily. In terms of assembly, homodimer; disulfide-linked. Heterodimer of BACH2 and Maf-related transcription factors. Post-translationally, phosphorylation at Ser-521 downstream of the PI-3K pathway promotes nuclear export. In terms of processing, the reversible disulfide bond may provide a mechanism to regulate the activity in oxidative stress responses. In terms of tissue distribution, B-cell specific.

The protein localises to the cytoplasm. It is found in the nucleus. Its function is as follows. Transcriptional regulator that acts as a repressor or activator. Binds to Maf recognition elements (MARE). Plays an important role in coordinating transcription activation and repression by MAFK. Induces apoptosis in response to oxidative stress through repression of the antiapoptotic factor HMOX1. Positively regulates the nuclear import of actin. Is a key regulator of adaptive immunity, crucial for the maintenance of regulatory T-cell function and B-cell maturation. The chain is Transcription regulator protein BACH2 (BACH2) from Homo sapiens (Human).